A 78-amino-acid chain; its full sequence is Small, acid-soluble spore protein Tlp (78 aa).

Residues 32-78 are disordered; that stretch reads SEEQLSFASEAEQEQIREKNERRNESIEAMRNEIHDEAEARKNGYHQ. Basic and acidic residues predominate over residues 45-78; the sequence is EQIREKNERRNESIEAMRNEIHDEAEARKNGYHQ.

It belongs to the Tlp family.

The protein resides in the spore core. This Bacillus licheniformis (strain ATCC 14580 / DSM 13 / JCM 2505 / CCUG 7422 / NBRC 12200 / NCIMB 9375 / NCTC 10341 / NRRL NRS-1264 / Gibson 46) protein is Small, acid-soluble spore protein Tlp.